A 176-amino-acid chain; its full sequence is ATP-dependent protease subunit HslV (176 aa).

Threonine 5 is an active-site residue. Na(+) is bound by residues serine 161, cysteine 164, and threonine 167.

Belongs to the peptidase T1B family. HslV subfamily. As to quaternary structure, a double ring-shaped homohexamer of HslV is capped on each side by a ring-shaped HslU homohexamer. The assembly of the HslU/HslV complex is dependent on binding of ATP.

Its subcellular location is the cytoplasm. The catalysed reaction is ATP-dependent cleavage of peptide bonds with broad specificity.. With respect to regulation, allosterically activated by HslU binding. Functionally, protease subunit of a proteasome-like degradation complex believed to be a general protein degrading machinery. The chain is ATP-dependent protease subunit HslV from Caldanaerobacter subterraneus subsp. tengcongensis (strain DSM 15242 / JCM 11007 / NBRC 100824 / MB4) (Thermoanaerobacter tengcongensis).